Here is a 398-residue protein sequence, read N- to C-terminus: Diaminopropionate ammonia-lyase (398 aa).

An N6-(pyridoxal phosphate)lysine modification is found at Lys77.

Belongs to the diaminopropionate ammonia-lyase family. In terms of assembly, homodimer. The cofactor is pyridoxal 5'-phosphate.

It catalyses the reaction (S)-2,3-diaminopropanoate + H2O + H(+) = pyruvate + 2 NH4(+). The catalysed reaction is (R)-2,3-diaminopropanoate + H2O + H(+) = pyruvate + 2 NH4(+). Its function is as follows. Catalyzes the alpha,beta-elimination reaction of both L- and D-alpha,beta-diaminopropionate (DAP) to form pyruvate and ammonia. The D-isomer of serine is degraded to pyruvate, though very poorly; other amino acids (L-serine, D- and L-threonine, D- and L-beta-Cl-alanine) are not substrates. The protein is Diaminopropionate ammonia-lyase (ygeX) of Escherichia coli O157:H7.